The chain runs to 476 residues: H2.0-like homeobox protein (476 aa).

Disordered stretches follow at residues 120 to 169 (QHLP…PSSK), 328 to 401 (WRHS…HQTT), and 413 to 476 (TASS…LAGL). 2 stretches are compositionally biased toward low complexity: residues 123–134 (PQQSPTQQQQPQ) and 158–168 (HHSGSAPAPSS). Residues 273 to 332 (RSWSRAVFSNLQRKGLEKRFEIQKYVTKPDRKQLAAMLGLTDAQVKVWFQNRRMKWRHSK) constitute a DNA-binding region (homeobox). Basic and acidic residues-rich tracts occupy residues 331 to 346 (SKEAQAQKDKDKEAGE) and 355 to 368 (EGEREERSPSRSEG). Over residues 369–379 (EAESESSDSES) the composition is skewed to acidic residues. Residues 386–397 (DTERTEGTERSL) are compositionally biased toward basic and acidic residues. The segment covering 413 to 434 (TASSSTSGSSFSFSSTSSLGSG) has biased composition (low complexity). Polar residues-rich tracts occupy residues 435–446 (NTHVGSASSLGG) and 455–467 (HQPSVTSSPQSPE).

The protein belongs to the H2.0 homeobox family. In terms of tissue distribution, expressed in Th1 cells, CD8-positive T-cells, B-cells and NK cells.

The protein localises to the nucleus. Functionally, transcription factor required for TBX21/T-bet-dependent maturation of Th1 cells as well as maintenance of Th1-specific gene expression. Involved in embryogenesis and hematopoiesis. In Mus musculus (Mouse), this protein is H2.0-like homeobox protein (Hlx).